We begin with the raw amino-acid sequence, 1321 residues long: Adhesion G protein-coupled receptor A3 (1321 aa).

Positions 1–33 (MEPPGRRRGRAQPPLLLPLSLLALLALLGGGGG) are cleaved as a signal peptide. Residues 34 to 761 (GGAAALPAGC…YTQAASLLHP (728 aa)) are Extracellular-facing. 2 N-linked (GlcNAc...) asparagine glycosylation sites follow: asparagine 81 and asparagine 98. 4 LRR repeats span residues 82–103 (RTVTLILSNNKISELKNGSFSG), 106–127 (LLERLDLRNNLISSIDPGAFWG), 130–151 (SLKRLDLTNNRIGCLNADIFRG), and 154–175 (NLVRLNLSGNLFSSLSQGTFDY). Residues asparagine 159, asparagine 206, asparagine 301, asparagine 332, asparagine 433, asparagine 453, and asparagine 592 are each glycosylated (N-linked (GlcNAc...) asparagine). An LRRCT domain is found at 187-237 (EYLLCDCNILWMHRWVKEKNITVRDTRCVYPKSLQAQPVTGVKQELLTCDP). In terms of domain architecture, Ig-like spans 242–340 (PSFYMTPSHR…GNNTRTVDIV (99 aa)). Cysteines 264 and 324 form a disulfide. The GAIN-B domain occupies 583–750 (LDKQLSFKCN…AVLMDLTGSE (168 aa)). The stretch at 594–620 (SNTFSSLALKNTIVEASIQLPPSLFSP) is one LRR 5 repeat. Asparagine 652, asparagine 687, and asparagine 728 each carry an N-linked (GlcNAc...) asparagine glycan. A GPS region spans residues 701-750 (AARWDFDLLNGQGGWKSDGCHILYSDENITTIQCYSLSNYAVLMDLTGSE). Cysteine 720 and cysteine 734 are joined by a disulfide. A helical membrane pass occupies residues 762–782 (VVYTTAIILLLCLLAVIVSYI). The Cytoplasmic portion of the chain corresponds to 783 to 796 (YHHSLIRISLKSWH). A helical membrane pass occupies residues 797 to 817 (MLVNLCFHIFLTCVVFVGGIT). The Extracellular segment spans residues 818–826 (QTRNASICQ). N-linked (GlcNAc...) asparagine glycosylation is present at asparagine 821. A helical membrane pass occupies residues 827–847 (AVGIILHYSTLATVLWVGVTA). Residues 848–876 (RNIYKQVTKKAKRCQDPDEPPPPPRPMLR) are Cytoplasmic-facing. The chain crosses the membrane as a helical span at residues 877–897 (FYLIGGGIPIIVCGITAAANI). At 898–919 (KNYGSRPNAPYCWMAWEPSLGA) the chain is on the extracellular side. Residues 920–940 (FYGPASFITFVNCMYFLSIFI) traverse the membrane as a helical segment. At 941-996 (QLKRHPERKYELKEPTEEQQRLAANENGEINHQDSMSLSLISTSALENEHTFHSQL) the chain is on the cytoplasmic side. A helical transmembrane segment spans residues 997 to 1017 (LGASLTLLLYVALWMFGALAV). Over 1018–1024 (SLYYPLD) the chain is Extracellular. A helical transmembrane segment spans residues 1025–1045 (LVFSFVFGATSLSFSAFFVVH). The Cytoplasmic segment spans residues 1046-1321 (HCVNREDVRL…TGLWKHETTV (276 aa)). Residues 1073 to 1083 (NVQPPNSNGTN) show a composition bias toward polar residues. Disordered stretches follow at residues 1073 to 1094 (NVQPPNSNGTNGEAPKCPNSSA), 1198 to 1219 (VEGSVQNGLPKSRLGNNEGHSR), 1231 to 1265 (QYNPPQQDSSDACSTLPKSSRNFEKPVSTTSKKDA), and 1294 to 1321 (SNGQEGPLLGTDSTGNVRTGLWKHETTV). Polar residues predominate over residues 1233 to 1250 (NPPQQDSSDACSTLPKSS). A PDZ-binding motif is present at residues 1319 to 1321 (TTV).

The protein belongs to the G-protein coupled receptor 2 family. Adhesion G-protein coupled receptor (ADGR) subfamily. Interacts (via PDZ-binding motif) with DLG1.

It is found in the membrane. Functionally, orphan receptor that may have a role in planar cell polarity pathway. This Homo sapiens (Human) protein is Adhesion G protein-coupled receptor A3.